The sequence spans 298 residues: Elongation factor Ts (298 aa).

Positions 80–83 (TDFV) are involved in Mg(2+) ion dislocation from EF-Tu.

Belongs to the EF-Ts family.

Its subcellular location is the cytoplasm. Functionally, associates with the EF-Tu.GDP complex and induces the exchange of GDP to GTP. It remains bound to the aminoacyl-tRNA.EF-Tu.GTP complex up to the GTP hydrolysis stage on the ribosome. This is Elongation factor Ts from Paracidovorax citrulli (strain AAC00-1) (Acidovorax citrulli).